Reading from the N-terminus, the 338-residue chain is MKVFYDKDCDLSLIKGKTVAIIGYGSQGHAHAQNLNDSGVKVVVGLRKGGASWDKVGKAGLTVKEVNDAVKEADVVMILLPDEQIAEVYKNNVEPHIKQGASLAFAHGFNVHYNQVVPRADLDVWMVAPKAPGHTVRNTYTQGGGVPHLVAVHQDKSGKARDLALSYAMANGGGKAGIIETNFKEETETDLFGEQAVLCGGAVELIKMGYETLVEAGYAPEMAYFECLHELKLIVDLIYEGGIANMNYSISNNAEFGEYVTGPEVINEQSRAAMRNALKRIQNGDYAKMFIQEGRLNYPSMTARRRNTADHSIEVVGAQLRAMMPWIAKNKLVDQTRN.

Positions 1–181 (MKVFYDKDCD…GGGKAGIIET (181 aa)) constitute a KARI N-terminal Rossmann domain. NADP(+) is bound by residues 24 to 27 (YGSQ), Arg-47, and Ser-52. Residue His-107 is part of the active site. Gly-133 is an NADP(+) binding site. One can recognise a KARI C-terminal knotted domain in the interval 182–327 (NFKEETETDL…AQLRAMMPWI (146 aa)). Asp-190, Glu-194, Glu-226, and Glu-230 together coordinate Mg(2+). Ser-251 is a substrate binding site.

It belongs to the ketol-acid reductoisomerase family. It depends on Mg(2+) as a cofactor.

It catalyses the reaction (2R)-2,3-dihydroxy-3-methylbutanoate + NADP(+) = (2S)-2-acetolactate + NADPH + H(+). It carries out the reaction (2R,3R)-2,3-dihydroxy-3-methylpentanoate + NADP(+) = (S)-2-ethyl-2-hydroxy-3-oxobutanoate + NADPH + H(+). Its pathway is amino-acid biosynthesis; L-isoleucine biosynthesis; L-isoleucine from 2-oxobutanoate: step 2/4. It functions in the pathway amino-acid biosynthesis; L-valine biosynthesis; L-valine from pyruvate: step 2/4. In terms of biological role, involved in the biosynthesis of branched-chain amino acids (BCAA). Catalyzes an alkyl-migration followed by a ketol-acid reduction of (S)-2-acetolactate (S2AL) to yield (R)-2,3-dihydroxy-isovalerate. In the isomerase reaction, S2AL is rearranged via a Mg-dependent methyl migration to produce 3-hydroxy-3-methyl-2-ketobutyrate (HMKB). In the reductase reaction, this 2-ketoacid undergoes a metal-dependent reduction by NADPH to yield (R)-2,3-dihydroxy-isovalerate. This is Ketol-acid reductoisomerase (NADP(+)) from Acidovorax ebreus (strain TPSY) (Diaphorobacter sp. (strain TPSY)).